An 888-amino-acid chain; its full sequence is Leukocyte tyrosine kinase receptor (888 aa).

Residues 1–16 (MGCSHRLLLWLGAAGT) form the signal peptide. Residues 17-421 (ILCSNSEFQT…CMDLPTTASP (405 aa)) lie on the Extracellular side of the membrane. Intrachain disulfides connect cysteine 73–cysteine 86 and cysteine 168–cysteine 179. Positions 226-294 (LVAAGGGGRS…RSPREGAEGG (69 aa)) are disordered. The span at 260 to 273 (GSGGRGGAAGGGSG) shows a compositional bias: gly residues. A disulfide bridge connects residues cysteine 297 and cysteine 319. Residues asparagine 377 and asparagine 409 are each glycosylated (N-linked (GlcNAc...) asparagine). A helical transmembrane segment spans residues 422–446 (LILMGAVVAALALSLLMMCAVLILV). Topologically, residues 447–888 (NQKCQGLWGT…SSSSSIPGIQ (442 aa)) are cytoplasmic. Positions 506–782 (VTLLRALGHG…IQYCTQDPDV (277 aa)) constitute a Protein kinase domain. Residues 512–520 (LGHGAFGEV) and lysine 540 contribute to the ATP site. Aspartate 639 serves as the catalytic Proton acceptor. Tyrosine 672 is subject to Phosphotyrosine; by autocatalysis. The disordered stretch occupies residues 857–888 (TYGSWTPRGPQGEDTGIEHCNGSSSSSIPGIQ). Polar residues predominate over residues 877–888 (NGSSSSSIPGIQ).

Belongs to the protein kinase superfamily. Tyr protein kinase family. Insulin receptor subfamily. As to quaternary structure, homodimer; homodimerizes following ligand-binding. Part of a complex including LTK, TNK2 and GRB2, in which GRB2 promotes LTK recruitment by TNK2. Post-translationally, phosphorylated at tyrosine residues by autocatalysis, which activates kinase activity. As to expression, subsets of lymphoid and neuronal cells.

It localises to the cell membrane. Its subcellular location is the endoplasmic reticulum. It carries out the reaction L-tyrosyl-[protein] + ATP = O-phospho-L-tyrosyl-[protein] + ADP + H(+). Activated by ligand-binding, leading to homodimerization and autophosphorylation. Its function is as follows. Receptor with a tyrosine-protein kinase activity. Following activation by ALKAL1 or ALKAL2 ligands at the cell surface, transduces an extracellular signal into an intracellular response. Ligand-binding to the extracellular domain induces tyrosine kinase activation, leading to activation of the mitogen-activated protein kinase (MAPK) pathway. Phosphorylates almost exclusively at the first tyrosine of the Y-x-x-x-Y-Y motif. The exact function of this protein is not known; studies with chimeric proteins demonstrate its ability to promote growth and specifically neurite outgrowth, and cell survival. Involved in regulation of the secretory pathway involving endoplasmic reticulum (ER) export sites (ERESs) and ER to Golgi transport. This Mus musculus (Mouse) protein is Leukocyte tyrosine kinase receptor.